A 40-amino-acid chain; its full sequence is uncharacterized protein (40 aa).

Polar residues predominate over residues 1 to 14 (MNRMLSLSVQSQRA). Residues 1–25 (MNRMLSLSVQSQRAPASPSPYGLKI) are disordered.

This is an uncharacterized protein from Treponema pallidum (strain Nichols).